Consider the following 687-residue polypeptide: DNA-directed RNA polymerase subunit beta' (687 aa).

Cys-69, Cys-71, Cys-87, and Cys-90 together coordinate Zn(2+). Mg(2+)-binding residues include Asp-493, Asp-495, and Asp-497.

It belongs to the RNA polymerase beta' chain family. RpoC1 subfamily. In terms of assembly, in plastids the minimal PEP RNA polymerase catalytic core is composed of four subunits: alpha, beta, beta', and beta''. When a (nuclear-encoded) sigma factor is associated with the core the holoenzyme is formed, which can initiate transcription. Mg(2+) is required as a cofactor. Zn(2+) serves as cofactor.

The protein localises to the plastid. It localises to the chloroplast. The enzyme catalyses RNA(n) + a ribonucleoside 5'-triphosphate = RNA(n+1) + diphosphate. Its function is as follows. DNA-dependent RNA polymerase catalyzes the transcription of DNA into RNA using the four ribonucleoside triphosphates as substrates. This is DNA-directed RNA polymerase subunit beta' from Angiopteris evecta (Mule's foot fern).